Here is a 718-residue protein sequence, read N- to C-terminus: Polyphosphate kinase (718 aa).

Asparagine 47 lines the ATP pocket. Residues arginine 372 and arginine 402 each coordinate Mg(2+). Histidine 432 acts as the Phosphohistidine intermediate in catalysis. ATP is bound by residues tyrosine 465, arginine 561, and histidine 589. Positions 683 to 718 (KADHGDTTPTSNAHQFIPMMSPKNEPDASDLDREDD) are disordered. The segment covering 709–718 (DASDLDREDD) has biased composition (acidic residues).

This sequence belongs to the polyphosphate kinase 1 (PPK1) family. Mg(2+) is required as a cofactor. An intermediate of this reaction is the autophosphorylated ppk in which a phosphate is covalently linked to a histidine residue through a N-P bond.

It catalyses the reaction [phosphate](n) + ATP = [phosphate](n+1) + ADP. Its function is as follows. Catalyzes the reversible transfer of the terminal phosphate of ATP to form a long-chain polyphosphate (polyP). This is Polyphosphate kinase from Lactiplantibacillus plantarum (strain ATCC BAA-793 / NCIMB 8826 / WCFS1) (Lactobacillus plantarum).